Consider the following 399-residue polypeptide: Nicotinate phosphoribosyltransferase 1 (399 aa).

At His-224 the chain carries Phosphohistidine; by autocatalysis.

The protein belongs to the NAPRTase family. In terms of processing, transiently phosphorylated on a His residue during the reaction cycle. Phosphorylation strongly increases the affinity for substrates and increases the rate of nicotinate D-ribonucleotide production. Dephosphorylation regenerates the low-affinity form of the enzyme, leading to product release.

It carries out the reaction nicotinate + 5-phospho-alpha-D-ribose 1-diphosphate + ATP + H2O = nicotinate beta-D-ribonucleotide + ADP + phosphate + diphosphate. It participates in cofactor biosynthesis; NAD(+) biosynthesis; nicotinate D-ribonucleotide from nicotinate: step 1/1. Its function is as follows. Catalyzes the synthesis of beta-nicotinate D-ribonucleotide from nicotinate and 5-phospho-D-ribose 1-phosphate at the expense of ATP. The polypeptide is Nicotinate phosphoribosyltransferase 1 (Pseudomonas aeruginosa (strain ATCC 15692 / DSM 22644 / CIP 104116 / JCM 14847 / LMG 12228 / 1C / PRS 101 / PAO1)).